The chain runs to 448 residues: Fumarate hydratase class II (448 aa).

Substrate contacts are provided by residues 83-85 (SGT), 113-116 (HPND), 123-125 (SSN), and Thr171. Residue His172 is the Proton donor/acceptor of the active site. Ser302 is a catalytic residue. Residues Ser303 and 308-310 (KVN) contribute to the substrate site.

It belongs to the class-II fumarase/aspartase family. Fumarase subfamily. Homotetramer.

It localises to the cytoplasm. It catalyses the reaction (S)-malate = fumarate + H2O. It participates in carbohydrate metabolism; tricarboxylic acid cycle; (S)-malate from fumarate: step 1/1. Its function is as follows. Involved in the TCA cycle. Catalyzes the stereospecific interconversion of fumarate to L-malate. This Blochmanniella floridana protein is Fumarate hydratase class II.